Reading from the N-terminus, the 78-residue chain is Translation initiation factor IF-1, chloroplastic (78 aa).

Positions 1–72 (MKKQKLIDME…TKGRITYRFH (72 aa)) constitute an S1-like domain.

Belongs to the IF-1 family. As to quaternary structure, component of the 30S ribosomal translation pre-initiation complex which assembles on the 30S ribosome in the order IF-2 and IF-3, IF-1 and N-formylmethionyl-tRNA(fMet); mRNA recruitment can occur at any time during PIC assembly.

The protein localises to the plastid. It is found in the chloroplast. Its function is as follows. One of the essential components for the initiation of protein synthesis. Stabilizes the binding of IF-2 and IF-3 on the 30S subunit to which N-formylmethionyl-tRNA(fMet) subsequently binds. Helps modulate mRNA selection, yielding the 30S pre-initiation complex (PIC). Upon addition of the 50S ribosomal subunit IF-1, IF-2 and IF-3 are released leaving the mature 70S translation initiation complex. The protein is Translation initiation factor IF-1, chloroplastic of Huperzia lucidula (Shining clubmoss).